The following is a 414-amino-acid chain: Transcription factor FAMA (414 aa).

Disordered stretches follow at residues 1–61 (MDKD…TPFD) and 142–197 (KEDQ…SQRM). Low complexity-rich tracts occupy residues 12 to 24 (GESS…NSSG) and 35 to 49 (QQQQ…QQHQ). Positions 166 to 175 (RENKNVTKKE) are enriched in basic and acidic residues. Basic residues predominate over residues 176-185 (VKSKRKRART). Residues 187-197 (KTSEEVESQRM) show a composition bias toward basic and acidic residues. In terms of domain architecture, bHLH spans 194 to 245 (SQRMTHIAVERNRRKQMNEHLRVLRSLMPGSYVQRGDQASIIGGAIEFVREL). Positions 249-253 (LQCLE) match the LxCxE motif motif.

Interacts with FAMA through its LxCxE motif. Self-interacts. Also interacts with bHLH071 and bHLH093. Interacts with RBR1. Resctricted to stomatal cell lineages (at protein level). Expressed in roots, leaves, stems, and flowers.

Its subcellular location is the nucleus. Its function is as follows. Transcription activator. Together with MYB88 and MYB124, ensures that stomata contain just two guard cells (GCs) by enforcing a single symmetric precursor cell division before stomatal maturity. Together with SPCH and MUTE, regulates the stomata formation. Required to promote differentiation and morphogenesis of stomatal guard cells and to halt proliferative divisions in their immediate precursors. Mediates the formation of stomata. Prevents histone H3K27me3 marks and derepresses stem cell gene expression. The chain is Transcription factor FAMA (FAMA) from Arabidopsis thaliana (Mouse-ear cress).